The chain runs to 871 residues: Espin (871 aa).

ANK repeat units follow at residues 1-31 (MALE…GPSL), 35-66 (LDAL…AVSR), 69-99 (NGAT…RVQE), 103-132 (SGAT…ANSA), 137-167 (TGAL…GVNA), 171-201 (NGAT…DPHL), 205-235 (DGMT…SFSE), 239-268 (DGAT…EISQ), and 271-300 (WGGT…GLDV). S338 and S342 each carry phosphoserine. Disordered regions lie at residues 349 to 400 (QLDS…RGIP), 416 to 469 (PEKS…VGLH), 493 to 750 (KVEL…APGV), and 819 to 850 (EREQ…TLGY). Residues 352–365 (SGMSSPNTTMSVQP) show a composition bias toward polar residues. Low complexity predominate over residues 377-395 (FSNYDSCSSSHSSSKGQRS). The span at 428-465 (PSPPPPPPPPPPSFPPPPPPTGTQPPPPPPGYPAPNPP) shows a compositional bias: pro residues. Residues S517, S524, and S556 each carry the phosphoserine modification. Positions 522–548 (QDSELLHRQELLRHSTGLRRQDSDRKQ) are enriched in basic and acidic residues. A compositionally biased stretch (pro residues) spans 606–629 (LPPPPPPPPLPEALSSPPPAPPLP). Polar residues-rich tracts occupy residues 659–670 (KSFNMMSPTGDN) and 685–707 (PTPQ…SQPE). Phosphoserine is present on S665. One can recognise a WH2 domain in the interval 669 to 686 (DNSELLAEIKAGKSLKPT). S704, S708, and S714 each carry phosphoserine. The stretch at 772-848 (KRQVMVRKLQ…KEQSEKLRTL (77 aa)) forms a coiled coil.

As to quaternary structure, monomer. Binds F-actin in a Ca(2+)-resistant fashion. Interacts (via N-terminus) with BAIAP2 (via SH3-domain). Interacts with PFN2. Interacts with MYO3A (via C-terminus). Interacts with MYO3B (via C-terminus). In terms of tissue distribution, expressed at high concentration in the microvillar parallel actin bundle (PAB) of hair cells stereocilia in the cochlea and vestibular system. Detected also at high levels of a number of other sensory cell types, including taste receptor cells, solitary chemoreceptor cells, vomeronasal sensory neurons and Merkel cells. Isoforms 2, 3, 4 and 5 are expressed in Purkinje cells dendritic spines. Expressed in utricle hair bundles (at protein level).

The protein localises to the cytoplasm. It is found in the cytoskeleton. The protein resides in the cell projection. Its subcellular location is the stereocilium. It localises to the microvillus. The protein localises to the cell junction. It is found in the dendritic spine. Its function is as follows. Multifunctional actin-bundling protein. Plays a major role in regulating the organization, dimension, dynamics and signaling capacities of the actin filament-rich microvilli in the mechanosensory and chemosensory cells. Required for the assembly and stabilization of the stereociliary parallel actin bundles. Plays a crucial role in the formation and maintenance of inner ear hair cell stereocilia. Involved in the elongation of actin in stereocilia. In extrastriolar hair cells, required for targeting MYO3B to stereocilia tips, and for regulation of stereocilia diameter and staircase formation. This is Espin (Espn) from Mus musculus (Mouse).